The primary structure comprises 306 residues: Oxygen-dependent coproporphyrinogen-III oxidase (306 aa).

A substrate-binding site is contributed by Ser93. His97 and His107 together coordinate a divalent metal cation. His107 acts as the Proton donor in catalysis. 109 to 111 (NVR) contacts substrate. The a divalent metal cation site is built by His146 and His176. Positions 241 to 276 (YVEYNLVYDRGTLFGLQSGGRTESILMSLPPQVAWG) are important for dimerization. Substrate is bound at residue 259–261 (GGR).

This sequence belongs to the aerobic coproporphyrinogen-III oxidase family. Homodimer. Requires a divalent metal cation as cofactor.

It is found in the cytoplasm. It catalyses the reaction coproporphyrinogen III + O2 + 2 H(+) = protoporphyrinogen IX + 2 CO2 + 2 H2O. It participates in porphyrin-containing compound metabolism; protoporphyrin-IX biosynthesis; protoporphyrinogen-IX from coproporphyrinogen-III (O2 route): step 1/1. In terms of biological role, involved in the heme biosynthesis. Catalyzes the aerobic oxidative decarboxylation of propionate groups of rings A and B of coproporphyrinogen-III to yield the vinyl groups in protoporphyrinogen-IX. This chain is Oxygen-dependent coproporphyrinogen-III oxidase, found in Stutzerimonas stutzeri (strain A1501) (Pseudomonas stutzeri).